We begin with the raw amino-acid sequence, 424 residues long: MKNEKLYREALQVMPGGVNSPVRAFKAVGGKPIFLVKGRGPRVWDAEGNEYIDFLASWGAIILGHAPKKVVKAVQEEAEKGLSFGLTNPHEVTLAKLVVEMVPSVEKVRFVNSGTEATMSAVRLARGVTGRKYIVKFEGCYHGHYDSLLVSAGSGVATFGIPGTPGIPEEIAKLTIVLPYNDVQALEEAFKEYGSEIAGVIVEPIAGNMGVVPPKKEFLIRLRELTKEYGSLLMFDEVITGFRLSKGGAQELFGIEPDITCLGKILGGGLPVGAYGGRREIMERVAPEGEVYQAGTLAGNPLAMVSGSETLKDLRDKEPYKELEEKMEKLARGVKDILTEKGIQHTINKVGSMMTVFFTDKKVVDFQTAKTSDTELFAKFFRALLNKGVLIPPSQFEAWFLTTAHEEEVIDEALERIRDAVKEL.

An N6-(pyridoxal phosphate)lysine modification is found at lysine 264.

Belongs to the class-III pyridoxal-phosphate-dependent aminotransferase family. HemL subfamily. As to quaternary structure, homodimer. Requires pyridoxal 5'-phosphate as cofactor.

It is found in the cytoplasm. It catalyses the reaction (S)-4-amino-5-oxopentanoate = 5-aminolevulinate. It participates in porphyrin-containing compound metabolism; protoporphyrin-IX biosynthesis; 5-aminolevulinate from L-glutamyl-tRNA(Glu): step 2/2. The chain is Glutamate-1-semialdehyde 2,1-aminomutase (hemL) from Aquifex aeolicus (strain VF5).